Consider the following 312-residue polypeptide: Malate dehydrogenase (312 aa).

NAD(+)-binding positions include 7-13 (GAAGGIG) and Asp34. Substrate-binding residues include Arg81 and Arg87. NAD(+) contacts are provided by residues Asn94 and 117–119 (ITN). Residues Asn119 and Arg153 each contribute to the substrate site. The Proton acceptor role is filled by His177. Met227 contacts NAD(+).

Belongs to the LDH/MDH superfamily. MDH type 1 family. Homodimer.

It carries out the reaction (S)-malate + NAD(+) = oxaloacetate + NADH + H(+). In terms of biological role, catalyzes the reversible oxidation of malate to oxaloacetate. In Edwardsiella ictaluri (strain 93-146), this protein is Malate dehydrogenase.